We begin with the raw amino-acid sequence, 652 residues long: ATP-dependent zinc metalloprotease FtsH (652 aa).

Topologically, residues 1–11 (MKKQNNGLIKN) are cytoplasmic. The chain crosses the membrane as a helical span at residues 12–32 (PFLWLLFIFFLVTGFQYFYSG). Residues 33–131 (NNSGGSQQIN…EVTVKHESSS (99 aa)) lie on the Extracellular side of the membrane. Residues 132–152 (GIWINLLVSIVPFGILFFFLF) form a helical membrane-spanning segment. At 153–652 (SMMGNMGGGN…EVKSKMNDEK (500 aa)) the chain is on the cytoplasmic side. 227–234 (GPPGTGKT) lines the ATP pocket. Histidine 449 is a binding site for Zn(2+). Glutamate 450 is an active-site residue. Residues histidine 453 and aspartate 525 each coordinate Zn(2+). A disordered region spans residues 628-652 (MPEAVEEESHALSYDEVKSKMNDEK). Over residues 634 to 652 (EESHALSYDEVKSKMNDEK) the composition is skewed to basic and acidic residues.

In the central section; belongs to the AAA ATPase family. It in the C-terminal section; belongs to the peptidase M41 family. As to quaternary structure, homohexamer. Requires Zn(2+) as cofactor.

The protein localises to the cell membrane. Functionally, acts as a processive, ATP-dependent zinc metallopeptidase for both cytoplasmic and membrane proteins. Plays a role in the quality control of integral membrane proteins. The chain is ATP-dependent zinc metalloprotease FtsH from Streptococcus pneumoniae serotype 4 (strain ATCC BAA-334 / TIGR4).